The sequence spans 403 residues: Chorismate synthase (403 aa).

The NADP(+) site is built by Arg-40 and Arg-46. FMN contacts are provided by residues Arg-140–Ser-142 and Gln-261–Ala-262. Positions Arg-277–Asn-298 are enriched in basic and acidic residues. The tract at residues Arg-277–Met-307 is disordered. Residues Gly-305, Lys-320 to Thr-324, and Arg-346 each bind FMN.

The protein belongs to the chorismate synthase family. In terms of assembly, homotetramer. It depends on FMNH2 as a cofactor.

It carries out the reaction 5-O-(1-carboxyvinyl)-3-phosphoshikimate = chorismate + phosphate. The protein operates within metabolic intermediate biosynthesis; chorismate biosynthesis; chorismate from D-erythrose 4-phosphate and phosphoenolpyruvate: step 7/7. In terms of biological role, catalyzes the anti-1,4-elimination of the C-3 phosphate and the C-6 proR hydrogen from 5-enolpyruvylshikimate-3-phosphate (EPSP) to yield chorismate, which is the branch point compound that serves as the starting substrate for the three terminal pathways of aromatic amino acid biosynthesis. This reaction introduces a second double bond into the aromatic ring system. This chain is Chorismate synthase, found in Corynebacterium aurimucosum (strain ATCC 700975 / DSM 44827 / CIP 107346 / CN-1) (Corynebacterium nigricans).